We begin with the raw amino-acid sequence, 1109 residues long: DNA mismatch repair protein MSH7 (1109 aa).

Disordered regions lie at residues 19 to 45 (TKGLVSGDAASGGGGSGGPRFNVKEGD) and 61 to 86 (DEVRGTDTPPEKVPRRVLPSGFKPAE). A compositionally biased stretch (basic and acidic residues) spans 61–74 (DEVRGTDTPPEKVP). Residue 853–860 (GPNMGGKS) participates in ATP binding.

It belongs to the DNA mismatch repair MutS family. As to quaternary structure, heterodimer consisting of MSH2-MSH7 (MutS gamma).

It is found in the nucleus. Its function is as follows. Component of the post-replicative DNA mismatch repair system (MMR). Forms the heterodimer MutS gamma (MSH2-MSH7 heterodimer) which binds to DNA mismatches thereby initiating DNA repair. MutS gamma recognizes specifically the T/G single base mismatch, but not trinucleotide insertion-deletion loops (IDL). This Arabidopsis thaliana (Mouse-ear cress) protein is DNA mismatch repair protein MSH7 (MSH7).